A 72-amino-acid polypeptide reads, in one-letter code: Osmotically-inducible lipoprotein B (72 aa).

The N-terminal stretch at 1–23 (MFMTSKKMAAAVLAITVAMSLSA) is a signal peptide. C24 is lipidated: N-palmitoyl cysteine. A lipid anchor (S-diacylglycerol cysteine) is attached at C24.

Its subcellular location is the cell membrane. Provides resistance to osmotic stress. May be important for stationary-phase survival. The chain is Osmotically-inducible lipoprotein B (osmB) from Salmonella typhimurium (strain LT2 / SGSC1412 / ATCC 700720).